A 477-amino-acid polypeptide reads, in one-letter code: MNEMTVKTRFAPSPTGALHLGNLRTALFNALLAYGHGGRFVLRIEDTDRERYSPEATRSLMGDLRWLGLDWQEGPEVGGPAPPYHQFERGFLYDAYYRQLEAEGWAYPCFCSERELEMARRAQRSAGQPPRYPGTCARLTAEEVARKRAEGMQPALRFRVPSGDEVRFEDRIHGEQRFRTDDIGDFIIRRADGTAAYLFTNAVDDALMGITDVLRGDDHLTNTPRQLLILQALGLAAPRYGHMGLITGNDGAPLSKRNGSRSVGELARDGYLPEAMLNYLARVGHTCESEALLDLAGLAEGFDPARISTAPSRFDPDHLRHWQEEAVHGSSVRRLRPWMGIDALVPPGYAEDLVNAVRGNVRFPAEARDWAKRVFAGPPELDADAEAAIVSAGAEFFEAAAGAAEEGYTRFKGLTEAVKERTGVKGKQLFMPLRAALTGRCSGPELQPVVDLMGGERVVERLRRAATLAAEQGAQGE.

The 'HIGH' region motif lies at P12–N22. The 'KMSKS' region signature appears at P253–R257. K256 contributes to the ATP binding site.

The protein belongs to the class-I aminoacyl-tRNA synthetase family. Glutamate--tRNA ligase type 1 subfamily. As to quaternary structure, monomer.

The protein localises to the cytoplasm. It carries out the reaction tRNA(Glu) + L-glutamate + ATP = L-glutamyl-tRNA(Glu) + AMP + diphosphate. Catalyzes the attachment of glutamate to tRNA(Glu) in a two-step reaction: glutamate is first activated by ATP to form Glu-AMP and then transferred to the acceptor end of tRNA(Glu). The protein is Glutamate--tRNA ligase 1 of Halorhodospira halophila (strain DSM 244 / SL1) (Ectothiorhodospira halophila (strain DSM 244 / SL1)).